Here is a 357-residue protein sequence, read N- to C-terminus: Peptide chain release factor 1 (357 aa).

Gln-234 carries the post-translational modification N5-methylglutamine. Residues 249–308 form a disordered region; it reads PSGVEVSCQDEKSQHKNRSKAMRVLRSRVYEKKREEQQAEREEARRSMVGSGDRSAKIRT. The segment covering 263–274 has biased composition (basic residues); it reads HKNRSKAMRVLR. Residues 276-294 are compositionally biased toward basic and acidic residues; that stretch reads RVYEKKREEQQAEREEARR.

Belongs to the prokaryotic/mitochondrial release factor family. In terms of processing, methylated by PrmC. Methylation increases the termination efficiency of RF1.

Its subcellular location is the cytoplasm. Its function is as follows. Peptide chain release factor 1 directs the termination of translation in response to the peptide chain termination codons UAG and UAA. The polypeptide is Peptide chain release factor 1 (Salinibacter ruber (strain DSM 13855 / M31)).